Here is a 312-residue protein sequence, read N- to C-terminus: Glyoxylate/hydroxypyruvate reductase A (312 aa).

R227 is a catalytic residue. H275 serves as the catalytic Proton donor.

It belongs to the D-isomer specific 2-hydroxyacid dehydrogenase family. GhrA subfamily.

It is found in the cytoplasm. It catalyses the reaction glycolate + NADP(+) = glyoxylate + NADPH + H(+). The enzyme catalyses (R)-glycerate + NAD(+) = 3-hydroxypyruvate + NADH + H(+). It carries out the reaction (R)-glycerate + NADP(+) = 3-hydroxypyruvate + NADPH + H(+). Its function is as follows. Catalyzes the NADPH-dependent reduction of glyoxylate and hydroxypyruvate into glycolate and glycerate, respectively. This Salmonella heidelberg (strain SL476) protein is Glyoxylate/hydroxypyruvate reductase A.